The sequence spans 1317 residues: Nucleoporin NUP145 (1317 aa).

Over residues 1–16 (MFNKSVNSGFTFGNQN) the composition is skewed to polar residues. The tract at residues 1–36 (MFNKSVNSGFTFGNQNTSTPTSTPAQPSSSLQFPQK) is disordered. Residues 12–13 (FG) form an FG 1 repeat. Low complexity predominate over residues 17 to 30 (TSTPTSTPAQPSSS). The stretch at 39–42 (GLFG) is one GLFG 1 repeat. Residues 79–80 (FG) form an FG 2 repeat. A GLFG 2 repeat occupies 89-92 (GLFG). Residues 106–107 (FG) form an FG 3 repeat. The disordered stretch occupies residues 133-165 (QNGGLFGNSNNNNITSTTQNGGLFGKPTTTPAG). GLFG repeat units follow at residues 136-139 (GLFG), 154-157 (GLFG), 168-171 (GLFG), and 181-184 (GLFG). Over residues 139 to 164 (GNSNNNNITSTTQNGGLFGKPTTTPA) the composition is skewed to low complexity. The stretch at 193–196 (GIFG) is one GLFG 7; approximate repeat. One copy of the GLFG 8 repeat lies at 206 to 209 (GLFG). Residues 249 to 278 (TSSLSDVNGKSDAEPKPIENRRTYSFSSSV) form a disordered region. Residues 257 to 270 (GKSDAEPKPIENRR) are compositionally biased toward basic and acidic residues. Serine 273 is subject to Phosphoserine. Residues 369–385 (RKLKIDSNRSAAKKLKL) carry the Bipartite nuclear localization signal motif. The disordered stretch occupies residues 390 to 450 (PAITKKHMQD…NLNKQDGENT (61 aa)). The segment at 398–523 (QDEQDSSENE…FGKIVIFRSS (126 aa)) is required for autocatalytic cleavage. Serine 403, serine 404, and serine 414 each carry phosphoserine. The segment covering 418 to 427 (IDRKENRDNN) has biased composition (basic and acidic residues). Over residues 428 to 444 (LDNTYLNGKEQSNNLNK) the composition is skewed to polar residues. Residues 458–605 (SFGYWCSPSP…GTWTFKVNHF (148 aa)) form the Peptidase S59 domain. The interval 460–604 (GYWCSPSPEQ…GGTWTFKVNH (145 aa)) is nucleoporin RNA-binding motif (NRM). Residues serine 667, serine 679, and serine 689 each carry the phosphoserine modification. Threonine 751 is modified (phosphothreonine).

Belongs to the nucleoporin GLFG family. Component of the nuclear pore complex (NPC). NPC constitutes the exclusive means of nucleocytoplasmic transport. NPCs allow the passive diffusion of ions and small molecules and the active, nuclear transport receptor-mediated bidirectional transport of macromolecules such as proteins, RNAs, ribonucleoparticles (RNPs), and ribosomal subunits across the nuclear envelope. Due to its 8-fold rotational symmetry, all subunits are present with 8 copies or multiples thereof. NUP145C is part of the heptameric 0.5 MDa autoassembling NUP84 NPC subcomplex (NUP84, NUP85, NUP120, NUP133, NUP145C, SEC13 and SEH1). NUP145N may bind homomeric RNA and interacts through its FG repeats with karyopherins. Interacts with MLP1 and MLP2. In terms of processing, NUP145 is autocatalytically cleaved in NUP145N and NUP145C.

It localises to the nucleus. Its subcellular location is the nuclear pore complex. The protein localises to the nucleus membrane. Its function is as follows. Functions as a component of the nuclear pore complex (NPC). NPC components, collectively referred to as nucleoporins (NUPs), can play the role of both NPC structural components and of docking or interaction partners for transiently associated nuclear transport factors. Active directional transport is assured by both, a Phe-Gly (FG) repeat affinity gradient for these transport factors across the NPC and a transport cofactor concentration gradient across the nuclear envelope (GSP1 and GSP2 GTPases associated predominantly with GTP in the nucleus, with GDP in the cytoplasm). NUP145 is autocatalytically cleaved in vivo in 2 polypeptides which assume different functions in the NPC. NUP145N as one of the FG repeat nucleoporins participates in karyopherin interactions and contains part of the autocatalytic cleavage activity. NUP145C as part of the NUP84 complex is involved in nuclear poly(A)+ RNA and tRNA export. It is also required for normal NPC distribution (probably through interactions with MLP1 and MLP2) and NPC assembly, as well as for normal nuclear envelope organization. The polypeptide is Nucleoporin NUP145 (NUP145) (Saccharomyces cerevisiae (strain ATCC 204508 / S288c) (Baker's yeast)).